The chain runs to 112 residues: uncharacterized protein (112 aa).

This is an uncharacterized protein from Rickettsia conorii (strain ATCC VR-613 / Malish 7).